Reading from the N-terminus, the 247-residue chain is 2,5-diamino-6-ribosylamino-4(3H)-pyrimidinone 5'-phosphate reductase (247 aa).

NADP(+) is bound by residues Thr-75, Asp-79, Gly-165, and Gly-187–Ile-191.

It belongs to the HTP reductase family. In terms of assembly, homodimer.

The catalysed reaction is 2,5-diamino-6-(1-D-ribitylamino)pyrimidin-4(3H)-one 5'-phosphate + NADP(+) = 2,5-diamino-6-(1-D-ribosylamino)pyrimidin-4(3H)-one 5'-phosphate + NADPH + H(+). It carries out the reaction 2,5-diamino-6-(1-D-ribitylamino)pyrimidin-4(3H)-one 5'-phosphate + NAD(+) = 2,5-diamino-6-(1-D-ribosylamino)pyrimidin-4(3H)-one 5'-phosphate + NADH + H(+). It functions in the pathway cofactor biosynthesis; riboflavin biosynthesis. In terms of biological role, catalyzes an early step in riboflavin biosynthesis, the NADPH-dependent reduction of the ribose side chain of 2,5-diamino-6-ribosylamino-4(3H)-pyrimidinone 5'-phosphate, yielding 2,5-diamino-6-ribitylamino-4(3H)-pyrimidinone 5'-phosphate. In Debaryomyces hansenii (strain ATCC 36239 / CBS 767 / BCRC 21394 / JCM 1990 / NBRC 0083 / IGC 2968) (Yeast), this protein is 2,5-diamino-6-ribosylamino-4(3H)-pyrimidinone 5'-phosphate reductase (RIB7).